The chain runs to 257 residues: MTAFSKHRWRGPVIRRPKTTFGAFLLLFWTWWALLAVFRAFPGIDIYFSQLFFLGTDCDATAAAGSICGGFPYRDSGNFDLLRTIFFRLPYVVAIVMAWKLIECYQQHGATFNAERARKLKVGLGALLIGPVLLVNVILKEHWGRPRPVQTDIFGGALHFVEAGSLAGKCVSNCSFVSGEAASAGWLFCLLLFVPKSLRYALVPPVAAISILTPAMRLSFGAHYLSDVTLGWLSSLVVFAALLALTESQQHQKNSEI.

Transmembrane regions (helical) follow at residues 21–41, 85–105, 119–139, 174–194, 201–221, and 225–245; these read FGAF…FRAF, IFFR…IECY, KLKV…NVIL, CSFV…LLFV, ALVP…LSFG, and LSDV…LLAL.

Belongs to the lipid A LpxF 4'-phosphatase family.

The protein localises to the cell inner membrane. It participates in bacterial outer membrane biogenesis; LPS lipid A biosynthesis. Probably removes the 4'-phosphate moiety from lipid A species. Not seen to act on other membrane components, nor does it dephosphorylate the 1-phosphate group of lipid A and/or lipid A precursors. The protein is Lipid A 4'-phosphatase of Rhizobium etli (strain ATCC 51251 / DSM 11541 / JCM 21823 / NBRC 15573 / CFN 42).